A 147-amino-acid chain; its full sequence is Sec-independent protein translocase protein TatB (147 aa).

Residues Met-1–Gly-21 traverse the membrane as a helical segment. The tract at residues Glu-114–Pro-147 is disordered.

The protein belongs to the TatB family. The Tat system comprises two distinct complexes: a TatABC complex, containing multiple copies of TatA, TatB and TatC subunits, and a separate TatA complex, containing only TatA subunits. Substrates initially bind to the TatABC complex, which probably triggers association of the separate TatA complex to form the active translocon.

The protein resides in the cell inner membrane. Functionally, part of the twin-arginine translocation (Tat) system that transports large folded proteins containing a characteristic twin-arginine motif in their signal peptide across membranes. Together with TatC, TatB is part of a receptor directly interacting with Tat signal peptides. TatB may form an oligomeric binding site that transiently accommodates folded Tat precursor proteins before their translocation. The polypeptide is Sec-independent protein translocase protein TatB (Aeromonas hydrophila subsp. hydrophila (strain ATCC 7966 / DSM 30187 / BCRC 13018 / CCUG 14551 / JCM 1027 / KCTC 2358 / NCIMB 9240 / NCTC 8049)).